Consider the following 82-residue polypeptide: Putative membrane protein insertion efficiency factor (82 aa).

Belongs to the UPF0161 family.

The protein localises to the cell inner membrane. Functionally, could be involved in insertion of integral membrane proteins into the membrane. This Thermus thermophilus (strain ATCC BAA-163 / DSM 7039 / HB27) protein is Putative membrane protein insertion efficiency factor.